An 86-amino-acid polypeptide reads, in one-letter code: MSIFNLFRRPTSAPMARERLQVLLAHERAAQGSDLVAILREEILAVISKHVQVDADKVRIKVDRDEHVSILEIDVEIPRDAQALAA.

The protein belongs to the MinE family.

Prevents the cell division inhibition by proteins MinC and MinD at internal division sites while permitting inhibition at polar sites. This ensures cell division at the proper site by restricting the formation of a division septum at the midpoint of the long axis of the cell. This chain is Cell division topological specificity factor, found in Allorhizobium ampelinum (strain ATCC BAA-846 / DSM 112012 / S4) (Agrobacterium vitis (strain S4)).